The sequence spans 204 residues: Urease accessory protein UreG (204 aa).

12-19 (GPVGSGKT) is a binding site for GTP.

Belongs to the SIMIBI class G3E GTPase family. UreG subfamily. As to quaternary structure, homodimer. UreD, UreF and UreG form a complex that acts as a GTP-hydrolysis-dependent molecular chaperone, activating the urease apoprotein by helping to assemble the nickel containing metallocenter of UreC. The UreE protein probably delivers the nickel.

The protein resides in the cytoplasm. Its function is as follows. Facilitates the functional incorporation of the urease nickel metallocenter. This process requires GTP hydrolysis, probably effectuated by UreG. In Ectopseudomonas mendocina (strain ymp) (Pseudomonas mendocina), this protein is Urease accessory protein UreG.